A 334-amino-acid polypeptide reads, in one-letter code: Mitochondrial glycine transporter (334 aa).

3 Solcar repeats span residues 22-106 (SKTT…LRQG), 135-219 (LSNW…LKRR), and 237-321 (SSSS…LILR). A run of 6 helical transmembrane segments spans residues 28–53 (FVAGLCSGLTSSILLQPADLLKTRVQ), 81–107 (GTLPSALRTGFGSALYFTSLNALRQGI), 141–166 (LATGAIARVAAGFVMMPVTVLKVRYE), 194–217 (GFGATAARDAPYAGLYVLFYEQLK), 241–267 (INFVSGGLAAGLATAITNPFDAVKTRL), and 296–314 (GLGLRITRKALSSALAWTV).

Belongs to the mitochondrial carrier (TC 2.A.29) family. SLC25A38 subfamily.

The protein resides in the mitochondrion inner membrane. The catalysed reaction is glycine(in) = glycine(out). In terms of biological role, mitochondrial glycine transporter that imports glycine into the mitochondrial matrix. Plays an important role in providing glycine for the first enzymatic step in heme biosynthesis, the condensation of glycine with succinyl-CoA to produce 5-aminolevulinate (ALA) in the mitochondrial matrix. In Aspergillus clavatus (strain ATCC 1007 / CBS 513.65 / DSM 816 / NCTC 3887 / NRRL 1 / QM 1276 / 107), this protein is Mitochondrial glycine transporter.